Here is a 724-residue protein sequence, read N- to C-terminus: 1,4-alpha-glucan branching enzyme GlgB 1 (724 aa).

The Nucleophile role is filled by D403. E456 serves as the catalytic Proton donor.

The protein belongs to the glycosyl hydrolase 13 family. GlgB subfamily. As to quaternary structure, monomer.

The catalysed reaction is Transfers a segment of a (1-&gt;4)-alpha-D-glucan chain to a primary hydroxy group in a similar glucan chain.. The protein operates within glycan biosynthesis; glycogen biosynthesis. Catalyzes the formation of the alpha-1,6-glucosidic linkages in glycogen by scission of a 1,4-alpha-linked oligosaccharide from growing alpha-1,4-glucan chains and the subsequent attachment of the oligosaccharide to the alpha-1,6 position. The polypeptide is 1,4-alpha-glucan branching enzyme GlgB 1 (glgB1) (Xanthomonas axonopodis pv. citri (strain 306)).